A 328-amino-acid chain; its full sequence is Sin3 histone deacetylase corepressor complex component SDS3 (328 aa).

Over residues 1–16 (MSAAGLLAPAPAQAGA) the composition is skewed to low complexity. The interval 1 to 65 (MSAAGLLAPA…DLAKHDEEDY (65 aa)) is disordered. Position 2 is an N-acetylserine (Ser2). Residues 2 to 170 (SAAGLLAPAP…IENEKLTMEL (169 aa)) are mediates interaction with USP17L2. Acidic residues-rich tracts occupy residues 23-37 (YPEE…EEDE) and 45-54 (SDEDTEDASE). Phosphoserine is present on residues Ser32 and Ser45. The residue at position 49 (Thr49) is a Phosphothreonine. At Ser53 the chain carries Phosphoserine. Basic and acidic residues predominate over residues 56-65 (DLAKHDEEDY). The stretch at 66–171 (VEMKEQMYQD…ENEKLTMELT (106 aa)) forms a coiled coil. Residues Lys69, Lys178, and Lys201 each participate in a glycyl lysine isopeptide (Lys-Gly) (interchain with G-Cter in SUMO2) cross-link. A sin3 interaction domain (SID) region spans residues 188–226 (RPNDPVPIPDKRRKPAPAQLNYLLTDEQIMEDLRTLNKL). The interval 226–252 (LKSPKRPASPSSPEHLPATPAESPAQR) is disordered. 3 positions are modified to phosphoserine: Ser228, Ser234, and Ser237. Thr244 is subject to Phosphothreonine.

It belongs to the SDS3 family. In terms of assembly, interacts with HCFC1. Homodimer. Component of the SIN3 histone deacetylase (HDAC) corepressor complex. Interacts with SIN3A. Interaction with SIN3B enhances the interaction between SIN3B and HDAC1 to form a complex. Component of a mSin3A corepressor complex that contains SIN3A, SAP130, SUDS3/SAP45, ARID4B/SAP180, HDAC1 and HDAC2. Interacts with USP17L2; the interaction is direct. Interacts with FOXK2. Polyubiquitinated. 'Lys-63'-polyubiquitinated SUDS3 positively regulates histone deacetylation. Regulated through deubiquitination by USP17L2/USP17 that cleaves 'Lys-63'-linked ubiquitin chains.

The protein localises to the nucleus. Functionally, regulatory protein which represses transcription and augments histone deacetylase activity of HDAC1. May have a potential role in tumor suppressor pathways through regulation of apoptosis. May function in the assembly and/or enzymatic activity of the mSin3A corepressor complex or in mediating interactions between the complex and other regulatory complexes. The polypeptide is Sin3 histone deacetylase corepressor complex component SDS3 (SUDS3) (Pongo abelii (Sumatran orangutan)).